We begin with the raw amino-acid sequence, 403 residues long: Phosphoglycerate kinase (403 aa).

Residues 21–23 (DFN), Arg-36, 59–62 (HLGR), Arg-119, and Arg-159 contribute to the substrate site. ATP is bound by residues Lys-214, Gly-301, Glu-332, and 359-362 (GGDS).

The protein belongs to the phosphoglycerate kinase family. In terms of assembly, monomer.

The protein resides in the cytoplasm. The enzyme catalyses (2R)-3-phosphoglycerate + ATP = (2R)-3-phospho-glyceroyl phosphate + ADP. It functions in the pathway carbohydrate degradation; glycolysis; pyruvate from D-glyceraldehyde 3-phosphate: step 2/5. In Lactobacillus delbrueckii subsp. bulgaricus (strain ATCC 11842 / DSM 20081 / BCRC 10696 / JCM 1002 / NBRC 13953 / NCIMB 11778 / NCTC 12712 / WDCM 00102 / Lb 14), this protein is Phosphoglycerate kinase.